Consider the following 451-residue polypeptide: Putative metabolite transport protein YyaJ (451 aa).

Over 1–29 (MNTIFKQKNTHPFSNAANRLDRLPISRVH) the chain is Cytoplasmic. A helical transmembrane segment spans residues 30–50 (FQVLTALGIVYFFDLADLFTL). Residues 51–60 (SNVAPALIEH) are Extracellular-facing. A helical membrane pass occupies residues 61–81 (WGIPLSTIANVTAASFLGMFL). Residues 82 to 97 (GASLGGRLSDRIGRKK) lie on the Cytoplasmic side of the membrane. The chain crosses the membrane as a helical span at residues 98-118 (ALNLFVFVFSIASLCNAAAWD). At 119–124 (IPSLMT) the chain is on the extracellular side. The chain crosses the membrane as a helical span at residues 125 to 145 (FRFLTGFGVAAAMVITNSYLA). Over 146-157 (EFFPSSVRGKYI) the chain is Cytoplasmic. A helical transmembrane segment spans residues 158-178 (SFCAMIGLIGVPITNIVSAFV). Over 179 to 182 (IPLG) the chain is Extracellular. A helical transmembrane segment spans residues 183-203 (SWGWRLVFVWGAVGLIYFFFI). At 204-270 (HRLEESPRWH…LLKGRNLKIT (67 aa)) the chain is on the cytoplasmic side. A helical membrane pass occupies residues 271-291 (IVLSAVWIFETFGFYGFASWV). Residues 292–305 (PSLLKSNGVTMENT) lie on the Extracellular side of the membrane. A helical membrane pass occupies residues 306–326 (LWYNVLHSVGAPLGALLGSMI). Residues 327 to 333 (SERFQRK) lie on the Cytoplasmic side of the membrane. A helical transmembrane segment spans residues 334-354 (WILAASAFLTAIAGLLYGMTF). Over 355-357 (IPI) the chain is Extracellular. A helical transmembrane segment spans residues 358 to 378 (MIIVFGFIVNITERVFTSNLY). Residues 379–396 (AYTSEPYPTEYRSSGSGL) lie on the Cytoplasmic side of the membrane. A helical transmembrane segment spans residues 397 to 417 (AYGLGRFSNIFGSLLVGFIAV). The Extracellular portion of the chain corresponds to 418–421 (QLGY). The helical transmembrane segment at 422–442 (ISVFLFIGGCWLACSLLLIFF) threads the bilayer. Over 443–451 (GPNTNAKQI) the chain is Cytoplasmic.

Belongs to the major facilitator superfamily. Sugar transporter (TC 2.A.1.1) family.

It is found in the cell membrane. This chain is Putative metabolite transport protein YyaJ (yyaJ), found in Bacillus subtilis (strain 168).